The primary structure comprises 167 residues: Troponin C-akin-1 protein (167 aa).

Position 17–20 (17–20 (YGAL)) interacts with substrate. Catalysis depends on Glu-92, which acts as the Proton acceptor.

This sequence belongs to the gamma-glutamylcyclotransferase family. In embryos, expression is seen in heart cells of the dorsal vessel and hindgut visceral mesoderm.

In terms of biological role, putative gamma-glutamylcyclotransferase. The sequence is that of Troponin C-akin-1 protein (Tina-1) from Drosophila melanogaster (Fruit fly).